The following is an 876-amino-acid chain: Alanine--tRNA ligase (876 aa).

K74 bears the N6-acetyllysine mark. Zn(2+) is bound by residues H564, H568, C666, and H670.

Belongs to the class-II aminoacyl-tRNA synthetase family. Homotetramer. Zn(2+) is required as a cofactor.

The protein localises to the cytoplasm. It carries out the reaction tRNA(Ala) + L-alanine + ATP = L-alanyl-tRNA(Ala) + AMP + diphosphate. In terms of biological role, catalyzes the attachment of alanine to tRNA(Ala) in a two-step reaction: alanine is first activated by ATP to form Ala-AMP and then transferred to the acceptor end of tRNA(Ala). Also edits incorrectly charged Ser-tRNA(Ala) and Gly-tRNA(Ala) via its editing domain. In Shigella flexneri serotype 5b (strain 8401), this protein is Alanine--tRNA ligase.